The chain runs to 103 residues: Large ribosomal subunit protein bL21 (103 aa).

The protein belongs to the bacterial ribosomal protein bL21 family. In terms of assembly, part of the 50S ribosomal subunit. Contacts protein L20.

Functionally, this protein binds to 23S rRNA in the presence of protein L20. The protein is Large ribosomal subunit protein bL21 of Mycolicibacterium smegmatis (strain ATCC 700084 / mc(2)155) (Mycobacterium smegmatis).